We begin with the raw amino-acid sequence, 330 residues long: Beta-ketoacyl-[acyl-carrier-protein] synthase III (330 aa).

Catalysis depends on residues cysteine 111 and histidine 249. Residues 250–254 (QANTR) are ACP-binding. Asparagine 279 is an active-site residue.

Belongs to the thiolase-like superfamily. FabH family. In terms of assembly, homodimer.

The protein resides in the cytoplasm. The catalysed reaction is malonyl-[ACP] + acetyl-CoA + H(+) = 3-oxobutanoyl-[ACP] + CO2 + CoA. The protein operates within lipid metabolism; fatty acid biosynthesis. Its function is as follows. Catalyzes the condensation reaction of fatty acid synthesis by the addition to an acyl acceptor of two carbons from malonyl-ACP. Catalyzes the first condensation reaction which initiates fatty acid synthesis and may therefore play a role in governing the total rate of fatty acid production. Possesses both acetoacetyl-ACP synthase and acetyl transacylase activities. Its substrate specificity determines the biosynthesis of branched-chain and/or straight-chain of fatty acids. The polypeptide is Beta-ketoacyl-[acyl-carrier-protein] synthase III (Pseudomonas aeruginosa (strain LESB58)).